A 110-amino-acid chain; its full sequence is U1-lycotoxin-Ls1dd (110 aa).

The signal sequence occupies residues 1–20 (MKFVLLFGVLLVTLFSYSSA). Residues 21–44 (EMLDDFDQADEDELLSLIEKEEAR) constitute a propeptide that is removed on maturation. Cystine bridges form between cysteine 47-cysteine 62, cysteine 54-cysteine 71, cysteine 61-cysteine 89, and cysteine 73-cysteine 87.

It belongs to the neurotoxin 19 (CSTX) family. 03 subfamily. In terms of tissue distribution, expressed by the venom gland.

It is found in the secreted. This Lycosa singoriensis (Wolf spider) protein is U1-lycotoxin-Ls1dd.